A 370-amino-acid polypeptide reads, in one-letter code: Actin-related protein 2/3 complex subunit 1A (370 aa).

6 WD repeats span residues 6–45 (FLLE…WVKA), 50–89 (EHNG…WKPT), 140–179 (PIRS…VDEK), 202–241 (GTGG…QVST), 244–284 (TEFL…TFVS), and 322–365 (LHQN…SSIQ).

It belongs to the WD repeat ARPC1 family. In terms of assembly, probable component of the Arp2/3 complex in which it may replace ARPC1B. In addition to its role in the cytoplasmic cytoskeleton, the Arp2/3 complex also promotes actin polymerization in the nucleus, thereby regulating gene transcription and repair of damaged DNA.

The protein resides in the cytoplasm. Its subcellular location is the cytoskeleton. The protein localises to the nucleus. Functionally, probably functions as a component of the Arp2/3 complex which is involved in regulation of actin polymerization and together with an activating nucleation-promoting factor (NPF) mediates the formation of branched actin networks. This Homo sapiens (Human) protein is Actin-related protein 2/3 complex subunit 1A (ARPC1A).